A 287-amino-acid chain; its full sequence is Nucleotide-binding protein Dtpsy_0831 (287 aa).

10–17 is an ATP binding site; it reads GMSGSGKS. A GTP-binding site is contributed by 59-62; that stretch reads DVRS.

Belongs to the RapZ-like family.

Its function is as follows. Displays ATPase and GTPase activities. The polypeptide is Nucleotide-binding protein Dtpsy_0831 (Acidovorax ebreus (strain TPSY) (Diaphorobacter sp. (strain TPSY))).